Reading from the N-terminus, the 97-residue chain is Type 1 phosphatases regulator YPI2 (97 aa).

The disordered stretch occupies residues 1-97 (MNKKKTKICC…KMMEKKSNNT (97 aa)). Residues 43-53 (ENDKDLGFDER) show a composition bias toward basic and acidic residues. A compositionally biased stretch (basic residues) spans 54–65 (RKRRVERRRRKL).

It belongs to the YPI1 family.

The protein localises to the nucleus. Functionally, regulator of type 1 phosphatases which maintains protein phosphatase activity under strict control. This Vanderwaltozyma polyspora (strain ATCC 22028 / DSM 70294 / BCRC 21397 / CBS 2163 / NBRC 10782 / NRRL Y-8283 / UCD 57-17) (Kluyveromyces polysporus) protein is Type 1 phosphatases regulator YPI2 (YPI2).